The chain runs to 410 residues: BTB and MATH domain-containing protein 42 (410 aa).

Residues methionine 1 to serine 19 show a composition bias toward polar residues. The tract at residues methionine 1–arginine 29 is disordered. The 129-residue stretch at serine 45 to valine 173 folds into the MATH domain. Residues threonine 219–glutamate 287 form the BTB domain. Residues threonine 389–lysine 410 form a disordered region. Over residues alanine 401–lysine 410 the composition is skewed to basic residues.

In terms of assembly, interacts with cul-3.

It participates in protein modification; protein ubiquitination. Functionally, probable substrate-specific adapter of an E3 ubiquitin-protein ligase complex which mediates the ubiquitination and subsequent proteasomal degradation of target proteins. This is BTB and MATH domain-containing protein 42 (bath-42) from Caenorhabditis elegans.